Reading from the N-terminus, the 478-residue chain is Glycogen synthase (478 aa).

Lys15 contributes to the ADP-alpha-D-glucose binding site.

The protein belongs to the glycosyltransferase 1 family. Bacterial/plant glycogen synthase subfamily.

The enzyme catalyses [(1-&gt;4)-alpha-D-glucosyl](n) + ADP-alpha-D-glucose = [(1-&gt;4)-alpha-D-glucosyl](n+1) + ADP + H(+). It participates in glycan biosynthesis; glycogen biosynthesis. Synthesizes alpha-1,4-glucan chains using ADP-glucose. This chain is Glycogen synthase, found in Enterobacter sp. (strain 638).